We begin with the raw amino-acid sequence, 381 residues long: Choline transport ATP-binding protein OpuBA (381 aa).

The ABC transporter domain maps to 2 to 236; it reads LTLENVSKTY…PADEFVEEFI (235 aa). 35–42 serves as a coordination point for ATP; the sequence is GPSGCGKT. 2 CBS domains span residues 256-314 and 316-374; these read MNTQ…LVSE and LHED…WGEE.

This sequence belongs to the ABC transporter superfamily.

Involved in a high affinity multicomponent binding-protein-dependent transport system for choline. Probably responsible for energy coupling to the transport system. This Bacillus subtilis (strain 168) protein is Choline transport ATP-binding protein OpuBA (opuBA).